The primary structure comprises 387 residues: 17-beta-hydroxysteroid dehydrogenase type 2 (387 aa).

A helical; Signal-anchor for type II membrane protein transmembrane segment spans residues Phe4 to Phe24. Gln82–Ala111 is a binding site for NAD(+). Residue Ser219 participates in substrate binding. Residue Tyr232 is part of the active site.

It belongs to the short-chain dehydrogenases/reductases (SDR) family. As to quaternary structure, homodimer. As to expression, expressed in placenta.

Its subcellular location is the endoplasmic reticulum membrane. It catalyses the reaction 17beta-estradiol + NAD(+) = estrone + NADH + H(+). It carries out the reaction testosterone + NAD(+) = androst-4-ene-3,17-dione + NADH + H(+). The catalysed reaction is 17beta-hydroxy-5alpha-androstan-3-one + NAD(+) = 5alpha-androstan-3,17-dione + NADH + H(+). The enzyme catalyses (20S)-hydroxypregn-4-en-3-one + NAD(+) = progesterone + NADH + H(+). Functionally, catalyzes the NAD-dependent oxidation of the highly active 17beta-hydroxysteroids, such as estradiol (E2), testosterone (T), and dihydrotestosterone (DHT), to their less active forms and thus regulates the biological potency of these steroids. Oxidizes estradiol to estrone, testosterone to androstenedione, and dihydrotestosterone to 5alpha-androstan-3,17-dione. Also has 20-alpha-HSD activity. This chain is 17-beta-hydroxysteroid dehydrogenase type 2, found in Homo sapiens (Human).